A 1117-amino-acid polypeptide reads, in one-letter code: RNA-directed RNA polymerase (1117 aa).

Positions M1 to A17 are enriched in polar residues. The interval M1–L23 is disordered.

The catalysed reaction is RNA(n) + a ribonucleoside 5'-triphosphate = RNA(n+1) + diphosphate. Its function is as follows. RNA-dependent RNA polymerase which replicates the viral genome. The polypeptide is RNA-directed RNA polymerase (p1) (Penicillium chrysogenum (Penicillium notatum)).